A 390-amino-acid polypeptide reads, in one-letter code: Multidrug resistance protein MdtL (390 aa).

The next 12 membrane-spanning stretches (helical) occupy residues 4-24 (FLIC…MYLV), 42-62 (IAFS…GKVA), 69-89 (PVAI…SRAT), 93-113 (LFLT…VVAF), 131-151 (LLNG…HLIM), 158-178 (SLFY…VFIL), 199-221 (LLNR…ILTF), 245-265 (ALTA…LSVF), 269-289 (TLML…SLSS), 293-313 (VTLF…GVAM), 316-336 (ALGP…IAQV), and 353-375 (ALNM…LMTI).

It belongs to the major facilitator superfamily. DHA1 family. MdtL (TC 2.A.1.2.22) subfamily.

It is found in the cell inner membrane. The sequence is that of Multidrug resistance protein MdtL from Citrobacter koseri (strain ATCC BAA-895 / CDC 4225-83 / SGSC4696).